The following is a 99-amino-acid chain: Bacterial microcompartment shell vertex protein EutN (99 aa).

In terms of domain architecture, BMV spans 5-87; sequence MKLAVVTGQI…VDLCVIGIVD (83 aa).

Belongs to the CcmL/EutN family. In terms of assembly, homopentamer with a small central pore.

It is found in the bacterial microcompartment. It participates in amine and polyamine degradation; ethanolamine degradation. In terms of biological role, probably forms vertices in the bacterial microcompartment (BMC) shell dedicated to ethanolamine degradation. Expression of eutK, eutL, eutM, eutN, eutS (eutSMNLK) in E.coli leads to formation of a single BMC. Coexpression of eutQ with eutSMNLK permits E.coli to make cells with more than one mobile BMC, as is usual in vivo. It may be involved in transporting positively charged molecules into and out of the BMC. The ethanolamine (EA) catabolic bacterial microcompartment (BMC) probably concentrates low levels of ethanolamine catabolic enzymes, concentrates volatile reaction intermediates, keeps the level of toxic acetaldehyde low, generates enough acetyl-CoA to support cell growth, and maintains a pool of free coenzyme A (CoA) and NAD. Its function is as follows. Expression of the eut operon allows this bacteria to use ethanolamine (EA) as a carbon, nitrogen and energy source. It relies on cobalamin (vitamin B12) both as a cofactor for the ethanolamine ammonia-lyase (EAL) activity and to induce the operon. EA enhances bacterial survival in macrophages in a concentration-dependent manner, suggesting it is an important nutrient during infection. This chain is Bacterial microcompartment shell vertex protein EutN, found in Salmonella typhimurium (strain LT2 / SGSC1412 / ATCC 700720).